The sequence spans 1028 residues: Golgin subfamily A member 2 (1028 aa).

The tract at residues 1 to 112 (MADQNRQIKL…NRPLSSTESL (112 aa)) is disordered. Over residues 40 to 60 (KGDQTDAPADRRSPENERVDV) the composition is skewed to basic and acidic residues. The segment covering 74 to 87 (NPASAINTDNSAPQ) has biased composition (polar residues). Coiled coils occupy residues 162-200 (NTQL…EQGA), 233-388 (ARQK…YAVQ), 414-690 (RDST…LLNG), 738-769 (LSRV…LTAL), and 799-840 (HEAL…LSGE). The disordered stretch occupies residues 259 to 280 (RTLSSVSTQQKQHERHNKELEK). The tract at residues 756–791 (RRIHQDTRQQLTALSHDHHHHHHHEPHSTCAETDGS) is disordered. The interval 944-981 (AMDVSSSPQSSTAEIQSQSSERPAADPISSPSLRPQED) is disordered. Polar residues predominate over residues 945-964 (MDVSSSPQSSTAEIQSQSSE).

This sequence belongs to the GOLGA2 family.

It is found in the golgi apparatus. Its subcellular location is the cis-Golgi network membrane. It localises to the endoplasmic reticulum-Golgi intermediate compartment membrane. The protein localises to the cytoplasm. The protein resides in the cytoskeleton. It is found in the spindle pole. Functionally, peripheral membrane component of the cis-Golgi stack that acts as a membrane skeleton that maintains the structure of the Golgi apparatus, and as a vesicle thether that facilitates vesicle fusion to the Golgi membrane. Required for normal protein transport from the endoplasmic reticulum to the Golgi apparatus and the cell membrane. Plays a central role in mitotic Golgi disassembly. Also plays a key role in spindle pole assembly and centrosome organization. It probably promotes mitotic spindle pole assembly by activating assembly factors to nucleate microtubules around the Golgi and capture them to couple mitotic membranes to the spindle. Also required for the Golgi ribbon formation and glycosylation of membrane and secretory proteins. This Danio rerio (Zebrafish) protein is Golgin subfamily A member 2.